The sequence spans 391 residues: Zinc finger protein DPF3 (391 aa).

Residues 152–165 (ENGDGFHDDEDFEV) are compositionally biased toward acidic residues. 2 disordered regions span residues 152 to 200 (ENGD…PYVC) and 236 to 266 (LAEE…QKAP). Residues 169-183 (KRKHRNKGRGRGSGR) show a composition bias toward basic residues. Residues 198 to 235 (YVCDNRYKQKHNSKTADSVCGKRYKNRPGLSYHYAHTH) form a C2H2-type zinc finger. 2 consecutive PHD-type zinc fingers follow at residues 273 to 333 (NDYC…CKSC) and 330 to 380 (CKSC…CQNL).

In terms of assembly, component of the BAF complex. Interacts with acetylated histones H3 and H4. Component of neuron-specific chromatin remodeling complex (nBAF complex), a subfamily of ATP-dependent SWI/SNF chromatin remodeling complexes. As to expression, expressed in the heart and somites.

The protein localises to the nucleus. Muscle-specific component of the BAF complex, a multiprotein complex involved in transcriptional activation and repression of select genes by chromatin remodeling (alteration of DNA-nucleosome topology). Specifically binds acetylated lysines on histone 3 and 4. In the complex, it acts as a tissue-specific anchor between histone acetylations and methylations and chromatin remodeling. Belongs to the neuron-specific chromatin remodeling complex (nBAF complex) and may play a role in neural development. Plays an essential role in heart and skeletal muscle development. The sequence is that of Zinc finger protein DPF3 (dpf3) from Danio rerio (Zebrafish).